Reading from the N-terminus, the 449-residue chain is Tubulin beta chain (449 aa).

Q11, E71, S140, G144, T145, G146, N206, and N228 together coordinate GTP. E71 serves as a coordination point for Mg(2+).

This sequence belongs to the tubulin family. In terms of assembly, dimer of alpha and beta chains. A typical microtubule is a hollow water-filled tube with an outer diameter of 25 nm and an inner diameter of 15 nM. Alpha-beta heterodimers associate head-to-tail to form protofilaments running lengthwise along the microtubule wall with the beta-tubulin subunit facing the microtubule plus end conferring a structural polarity. Microtubules usually have 13 protofilaments but different protofilament numbers can be found in some organisms and specialized cells. Mg(2+) serves as cofactor.

The protein localises to the cytoplasm. The protein resides in the cytoskeleton. In terms of biological role, tubulin is the major constituent of microtubules, a cylinder consisting of laterally associated linear protofilaments composed of alpha- and beta-tubulin heterodimers. Microtubules grow by the addition of GTP-tubulin dimers to the microtubule end, where a stabilizing cap forms. Below the cap, tubulin dimers are in GDP-bound state, owing to GTPase activity of alpha-tubulin. This chain is Tubulin beta chain (TUBB), found in Cicer arietinum (Chickpea).